The chain runs to 512 residues: ATP synthase subunit alpha 2 (512 aa).

An ATP-binding site is contributed by 169-176 (GDRQTGKT).

The protein belongs to the ATPase alpha/beta chains family. As to quaternary structure, F-type ATPases have 2 components, CF(1) - the catalytic core - and CF(0) - the membrane proton channel. CF(1) has five subunits: alpha(3), beta(3), gamma(1), delta(1), epsilon(1). CF(0) has three main subunits: a(1), b(2) and c(9-12). The alpha and beta chains form an alternating ring which encloses part of the gamma chain. CF(1) is attached to CF(0) by a central stalk formed by the gamma and epsilon chains, while a peripheral stalk is formed by the delta and b chains.

The protein resides in the cell inner membrane. The catalysed reaction is ATP + H2O + 4 H(+)(in) = ADP + phosphate + 5 H(+)(out). Its function is as follows. Produces ATP from ADP in the presence of a proton gradient across the membrane. The alpha chain is a regulatory subunit. This is ATP synthase subunit alpha 2 from Vibrio campbellii (strain ATCC BAA-1116).